Consider the following 200-residue polypeptide: Probable E3 ubiquitin-protein ligase ATL45 (200 aa).

Residues 26-46 (MVVILSALLCALVCVAGLAAV) form a helical membrane-spanning segment. An RING-type; atypical zinc finger spans residues 113–155 (CAICITEFSEGEEIRILPLCSHAFHVACIDKWLTSRSSCPSCR).

The protein belongs to the RING-type zinc finger family. ATL subfamily. In terms of assembly, interacts with BIK1.

The protein localises to the membrane. It catalyses the reaction S-ubiquitinyl-[E2 ubiquitin-conjugating enzyme]-L-cysteine + [acceptor protein]-L-lysine = [E2 ubiquitin-conjugating enzyme]-L-cysteine + N(6)-ubiquitinyl-[acceptor protein]-L-lysine.. It participates in protein modification; protein ubiquitination. In terms of biological role, E3 ubiquitin-protein ligase that possess E3 ubiquitin ligase activity in vitro and mediates protein monoubiquitination. Triggers the monoubiquitination of phosphorylated BIK1 in response to pathogen-associated molecular pattern (PAMP) detection. May be involved in the early steps of the plant defense signaling pathway. The protein is Probable E3 ubiquitin-protein ligase ATL45 of Arabidopsis thaliana (Mouse-ear cress).